Consider the following 441-residue polypeptide: Homogentisate 1,2-dioxygenase (441 aa).

The active-site Proton acceptor is the H287. Positions 330 and 336 each coordinate Fe cation. Homogentisate contacts are provided by Y345 and H366. H366 lines the Fe cation pocket.

It belongs to the homogentisate dioxygenase family. As to quaternary structure, hexamer; dimer of trimers. Fe cation serves as cofactor.

It catalyses the reaction homogentisate + O2 = 4-maleylacetoacetate + H(+). It participates in amino-acid degradation; L-phenylalanine degradation; acetoacetate and fumarate from L-phenylalanine: step 4/6. Involved in the catabolism of homogentisate (2,5-dihydroxyphenylacetate or 2,5-OH-PhAc), a central intermediate in the degradation of phenylalanine and tyrosine. Catalyzes the oxidative ring cleavage of the aromatic ring of homogentisate to yield maleylacetoacetate. The polypeptide is Homogentisate 1,2-dioxygenase (Xanthomonas oryzae pv. oryzae (strain KACC10331 / KXO85)).